We begin with the raw amino-acid sequence, 323 residues long: NAC transcription factor 25 (323 aa).

Residues 16 to 177 (LPPGFRFHPT…DWVLCRIYKK (162 aa)) form the NAC domain. Residues 114–183 (VGVKKALVFY…IYKKNSSQRP (70 aa)) mediate DNA binding. Residues 201–221 (KSSANSSSTSVLDNNDNNNNN) are compositionally biased toward low complexity. The segment at 201–223 (KSSANSSSTSVLDNNDNNNNNNE) is disordered.

In terms of tissue distribution, expressed specifically in the tapetum.

The protein localises to the nucleus. Its function is as follows. Transcription factor of the NAC family. May be associated with anther development and pollen production. Required for normal seed development and morphology. The protein is NAC transcription factor 25 (NAC025) of Arabidopsis thaliana (Mouse-ear cress).